The sequence spans 355 residues: NADH-quinone oxidoreductase subunit H (355 aa).

8 helical membrane-spanning segments follow: residues 25–45 (VVRI…LILW), 91–111 (WLYL…WAVI), 126–146 (LLYA…AGWA), 170–190 (MGFA…SEIV), 205–225 (FLSW…ISGI), 253–273 (MAFA…SALA), 290–310 (FIPG…VFIW), and 330–350 (VFLP…MSPL).

It belongs to the complex I subunit 1 family. NDH-1 is composed of 14 different subunits. Subunits NuoA, H, J, K, L, M, N constitute the membrane sector of the complex.

It localises to the cell inner membrane. It catalyses the reaction a quinone + NADH + 5 H(+)(in) = a quinol + NAD(+) + 4 H(+)(out). Its function is as follows. NDH-1 shuttles electrons from NADH, via FMN and iron-sulfur (Fe-S) centers, to quinones in the respiratory chain. The immediate electron acceptor for the enzyme in this species is believed to be ubiquinone. Couples the redox reaction to proton translocation (for every two electrons transferred, four hydrogen ions are translocated across the cytoplasmic membrane), and thus conserves the redox energy in a proton gradient. This subunit may bind ubiquinone. In Burkholderia cenocepacia (strain HI2424), this protein is NADH-quinone oxidoreductase subunit H.